A 201-amino-acid chain; its full sequence is uncharacterized protein (201 aa).

This is an uncharacterized protein from Lepidoptera (butterflies and moths).